Here is a 412-residue protein sequence, read N- to C-terminus: Multifunctional CCA protein (412 aa).

2 residues coordinate ATP: glycine 8 and arginine 11. 2 residues coordinate CTP: glycine 8 and arginine 11. The Mg(2+) site is built by aspartate 21 and aspartate 23. ATP-binding residues include arginine 91, arginine 137, and arginine 140. Positions 91, 137, and 140 each coordinate CTP. Positions threonine 228–tryptophan 329 constitute an HD domain.

This sequence belongs to the tRNA nucleotidyltransferase/poly(A) polymerase family. Bacterial CCA-adding enzyme type 1 subfamily. In terms of assembly, monomer. Can also form homodimers and oligomers. Requires Mg(2+) as cofactor. It depends on Ni(2+) as a cofactor.

It carries out the reaction a tRNA precursor + 2 CTP + ATP = a tRNA with a 3' CCA end + 3 diphosphate. The catalysed reaction is a tRNA with a 3' CCA end + 2 CTP + ATP = a tRNA with a 3' CCACCA end + 3 diphosphate. Its function is as follows. Catalyzes the addition and repair of the essential 3'-terminal CCA sequence in tRNAs without using a nucleic acid template. Adds these three nucleotides in the order of C, C, and A to the tRNA nucleotide-73, using CTP and ATP as substrates and producing inorganic pyrophosphate. tRNA 3'-terminal CCA addition is required both for tRNA processing and repair. Also involved in tRNA surveillance by mediating tandem CCA addition to generate a CCACCA at the 3' terminus of unstable tRNAs. While stable tRNAs receive only 3'-terminal CCA, unstable tRNAs are marked with CCACCA and rapidly degraded. This Escherichia coli O6:H1 (strain CFT073 / ATCC 700928 / UPEC) protein is Multifunctional CCA protein.